Reading from the N-terminus, the 446-residue chain is MKKAYVKSYGCQMNAYDAGRMADVLAAEGYSATESVEEADVVVLNTCHIREKAAEKVYSELGRLRVLKGERAESGQDTRIVVAGCVAQAEGREILSRAPAVDVVVGPQSYHRLPDLLRQSRETRVVDTEFPVEDKFDHLPARRNRGVTGFLTVQEGCDKFCAFCVVPYTRGAEVSRSVAAVVEEARRLVEGGVREITLIGQNVNAYHGDGPDGAPATLGHLMDALSAVPGLLRLRYTTSHPNDFADDLIAAHAGNPLVMPYLHLPVQSGSDRILHAMNRRHTGDAYRRLIERIRTARPDIALSSDFIVGFPGESDADFAETMRLVAEIGFAAAFSFKYSPRAGTPAAEREDAVPEAVKTERLAALQQLLDQQRHAFNAAAVGTVAEILVEKTGRHPGQVAGKTPHLQAVQFDAPASTIGTLVPVRITRAGSNSLFGEVLEGAAAAA.

The MTTase N-terminal domain maps to 2–122 (KKAYVKSYGC…LPDLLRQSRE (121 aa)). Residues Cys-11, Cys-47, Cys-85, Cys-157, Cys-161, and Cys-164 each coordinate [4Fe-4S] cluster. In terms of domain architecture, Radical SAM core spans 143 to 375 (RNRGVTGFLT…QQLLDQQRHA (233 aa)). Positions 378–440 (AAAVGTVAEI…SNSLFGEVLE (63 aa)) constitute a TRAM domain.

Belongs to the methylthiotransferase family. MiaB subfamily. As to quaternary structure, monomer. [4Fe-4S] cluster is required as a cofactor.

Its subcellular location is the cytoplasm. It carries out the reaction N(6)-dimethylallyladenosine(37) in tRNA + (sulfur carrier)-SH + AH2 + 2 S-adenosyl-L-methionine = 2-methylsulfanyl-N(6)-dimethylallyladenosine(37) in tRNA + (sulfur carrier)-H + 5'-deoxyadenosine + L-methionine + A + S-adenosyl-L-homocysteine + 2 H(+). Its function is as follows. Catalyzes the methylthiolation of N6-(dimethylallyl)adenosine (i(6)A), leading to the formation of 2-methylthio-N6-(dimethylallyl)adenosine (ms(2)i(6)A) at position 37 in tRNAs that read codons beginning with uridine. This Methylorubrum populi (strain ATCC BAA-705 / NCIMB 13946 / BJ001) (Methylobacterium populi) protein is tRNA-2-methylthio-N(6)-dimethylallyladenosine synthase.